The sequence spans 601 residues: Glutathione-regulated potassium-efflux system protein KefB (601 aa).

The next 13 membrane-spanning stretches (helical) occupy residues 4–24 (SDFLLAGVLFLFAAVAAVPLA), 29–49 (IGAVLGYLLAGIAIGPWGLGF), 55–75 (EILHFSELGVVFLMFIIGLEL), 87–107 (IFGVGAAQVLLSAALLAGLLM), 115–135 (AAVVGGIGLAMSSTAMALQLM), 152–172 (VLLFQDLAVIPALALVPLLAG), 177–197 (HFDWMKIGIKVLAFVGMLIGG), 207–227 (FIAASGVREVFTAATLLLVLG), 230–250 (LFMDALGLSMALGTFIAGVLL), 268–288 (GLLLGLFFISVGMSLNLGVLY), 291–311 (LLWVVISVVVLVAVKILVLYL), 324–344 (MQFAGVLSQGGEFAFVLFSTA), and 356–376 (ALLLVTVTLSMMTTPLLMKLV). The RCK N-terminal domain occupies 400-519 (KPQVIVVGFG…AGVTQFSRET (120 aa)).

The protein belongs to the monovalent cation:proton antiporter 2 (CPA2) transporter (TC 2.A.37) family. KefB subfamily. Interacts with the regulatory subunit KefG.

It localises to the cell inner membrane. Pore-forming subunit of a potassium efflux system that confers protection against electrophiles. Catalyzes K(+)/H(+) antiport. In Escherichia coli (strain ATCC 8739 / DSM 1576 / NBRC 3972 / NCIMB 8545 / WDCM 00012 / Crooks), this protein is Glutathione-regulated potassium-efflux system protein KefB.